A 169-amino-acid chain; its full sequence is Transcription antitermination protein NusB (169 aa).

This sequence belongs to the NusB family.

Functionally, involved in transcription antitermination. Required for transcription of ribosomal RNA (rRNA) genes. Binds specifically to the boxA antiterminator sequence of the ribosomal RNA (rrn) operons. The polypeptide is Transcription antitermination protein NusB (Rhodococcus opacus (strain B4)).